Reading from the N-terminus, the 315-residue chain is Olfactory receptor 2V2 (315 aa).

The Extracellular segment spans residues 1–26; the sequence is METWVNQSYTDGFFLLGIFSHSTADL. Residue asparagine 6 is glycosylated (N-linked (GlcNAc...) asparagine). The helical transmembrane segment at 27 to 50 threads the bilayer; that stretch reads VLFSVVMAVFTVALCGNVLLIFLI. Residues 51 to 58 are Cytoplasmic-facing; that stretch reads YMDPHLHT. Residues 59-80 form a helical membrane-spanning segment; the sequence is PMYFFLSQLSLMDLMLVCTNVP. Over 81–101 the chain is Extracellular; it reads KMAANFLSGRKSISFVGCGIQ. An intrachain disulfide couples cysteine 98 to cysteine 190. Residues 102-121 form a helical membrane-spanning segment; the sequence is IGLFVCLVGSEGLLLGLMAY. The Cytoplasmic segment spans residues 122 to 140; that stretch reads DRYVAISHPLHYPILMNQR. Residues 141-159 form a helical membrane-spanning segment; sequence VCLQITGSSWAFGIIDGLI. Residues 160-196 are Extracellular-facing; that stretch reads QMVVVMNFPYCGLRKVNHFFCEMLSLLKLACVDTSLF. Residues 197-220 form a helical membrane-spanning segment; that stretch reads EKVIFACCVFMLLFPFSIIVASYA. Residues 221-237 lie on the Cytoplasmic side of the membrane; sequence HILGTVLQMHSAQAWKK. A helical membrane pass occupies residues 238 to 260; sequence ALATCSSHLTAVTLFYGAAMFIY. Residues 261-273 lie on the Extracellular side of the membrane; it reads LRPRHYRAPSHDK. The chain crosses the membrane as a helical span at residues 274–293; sequence VASIFYTVLTPMLNPLIYSL. Residues 294–315 are Cytoplasmic-facing; the sequence is RNREVMGALRKGLDRCRIGSQH.

The protein belongs to the G-protein coupled receptor 1 family.

Its subcellular location is the cell membrane. In terms of biological role, odorant receptor. The polypeptide is Olfactory receptor 2V2 (OR2V2) (Homo sapiens (Human)).